The sequence spans 151 residues: MSTTARRRLMRDFKRMQQDPPQGVSASPVADNVLTWNAVIIGPAETPFEDGTFRMVLQFDEQYPNKPPAVKFVSQMFHPNVYSSGELCLDILQNRWSPTYDVAAILTSVQSLLNDPNTSSPANVEASMLYKDHRQQYEKRVRDTVEASWTD.

The interval 1–26 (MSTTARRRLMRDFKRMQQDPPQGVSA) is disordered. The 147-residue stretch at 4–150 (TARRRLMRDF…VRDTVEASWT (147 aa)) folds into the UBC core domain. Cys-88 acts as the Glycyl thioester intermediate in catalysis.

It belongs to the ubiquitin-conjugating enzyme family.

The protein localises to the cytoplasm. Its subcellular location is the nucleus. The enzyme catalyses S-ubiquitinyl-[E1 ubiquitin-activating enzyme]-L-cysteine + [E2 ubiquitin-conjugating enzyme]-L-cysteine = [E1 ubiquitin-activating enzyme]-L-cysteine + S-ubiquitinyl-[E2 ubiquitin-conjugating enzyme]-L-cysteine.. Its pathway is protein modification; protein ubiquitination. Functionally, catalyzes the covalent attachment of ubiquitin to other proteins. Plays a role in transcription regulation by catalyzing the monoubiquitination of histone H2B to form H2BK123ub1. H2BK123ub1 gives a specific tag for epigenetic transcriptional activation and is also a prerequisite for H3K4me and H3K79me formation. Also involved in postreplication repair of UV-damaged DNA, in N-end rule-dependent protein degradation and in sporulation. This is Ubiquitin-conjugating enzyme E2 2 (UBC2) from Yarrowia lipolytica (strain CLIB 122 / E 150) (Yeast).